We begin with the raw amino-acid sequence, 119 residues long: Large ribosomal subunit protein uL18 (119 aa).

The interval 1 to 20 (MISKPDKNKTRQKRHTRVRG) is disordered. The span at 10–20 (TRQKRHTRVRG) shows a compositional bias: basic residues.

It belongs to the universal ribosomal protein uL18 family. As to quaternary structure, part of the 50S ribosomal subunit; part of the 5S rRNA/L5/L18/L25 subcomplex. Contacts the 5S and 23S rRNAs.

Functionally, this is one of the proteins that bind and probably mediate the attachment of the 5S RNA into the large ribosomal subunit, where it forms part of the central protuberance. This chain is Large ribosomal subunit protein uL18, found in Latilactobacillus sakei subsp. sakei (strain 23K) (Lactobacillus sakei subsp. sakei).